A 510-amino-acid chain; its full sequence is Glutamyl-tRNA(Gln) amidotransferase subunit A (510 aa).

Active-site charge relay system residues include Lys-82 and Ser-157. Catalysis depends on Ser-181, which acts as the Acyl-ester intermediate.

This sequence belongs to the amidase family. GatA subfamily. In terms of assembly, heterotrimer of A, B and C subunits.

The catalysed reaction is L-glutamyl-tRNA(Gln) + L-glutamine + ATP + H2O = L-glutaminyl-tRNA(Gln) + L-glutamate + ADP + phosphate + H(+). Functionally, allows the formation of correctly charged Gln-tRNA(Gln) through the transamidation of misacylated Glu-tRNA(Gln) in organisms which lack glutaminyl-tRNA synthetase. The reaction takes place in the presence of glutamine and ATP through an activated gamma-phospho-Glu-tRNA(Gln). The sequence is that of Glutamyl-tRNA(Gln) amidotransferase subunit A from Bordetella avium (strain 197N).